A 131-amino-acid chain; its full sequence is Glycine cleavage system H protein (131 aa).

Residues 24–106 form the Lipoyl-binding domain; it reads TVTIGITDHA…YEDGWIIKLK (83 aa). K65 carries the post-translational modification N6-lipoyllysine.

This sequence belongs to the GcvH family. The glycine cleavage system is composed of four proteins: P, T, L and H. Requires (R)-lipoate as cofactor.

In terms of biological role, the glycine cleavage system catalyzes the degradation of glycine. The H protein shuttles the methylamine group of glycine from the P protein to the T protein. This Chromohalobacter salexigens (strain ATCC BAA-138 / DSM 3043 / CIP 106854 / NCIMB 13768 / 1H11) protein is Glycine cleavage system H protein.